Here is a 418-residue protein sequence, read N- to C-terminus: Serum response factor homolog A (418 aa).

Disordered stretches follow at residues 14–67 (LGNV…GKKA), 144–170 (CLNT…LLQQ), 301–351 (RLGK…NNNS), and 388–418 (SSSS…FPPC). 2 stretches are compositionally biased toward low complexity: residues 22–39 (PSSP…PTST) and 51–61 (TSEPSSPSTGE). The region spanning 67 to 127 (AGRRKIKIEF…GHVYTFATAK (61 aa)) is the MADS-box domain. Composition is skewed to low complexity over residues 150 to 170 (NPNS…LLQQ), 306 to 351 (NNNN…NNNS), and 388 to 399 (SSSSASSSPASP). The segment covering 400–418 (NQFNYSNHSMPLNNQFPPC) has biased composition (polar residues).

The protein resides in the nucleus. Its function is as follows. Required for proper slug migration, spore differentiation and stalk differentiation (under nonbuffered conditions). Could be involved in late events of spore maturation necessary for spore stability. This chain is Serum response factor homolog A (srfA), found in Dictyostelium discoideum (Social amoeba).